The sequence spans 434 residues: Lipoyl synthase, mitochondrial (434 aa).

Residues 1 to 31 (MAASARGLRTLQSAHSSTTVPRLQLAVSRCY) constitute a mitochondrion transit peptide. The segment covering 34 to 54 (TTSPDPPITNSSNSSNSTPTP) has biased composition (low complexity). Positions 34–55 (TTSPDPPITNSSNSSNSTPTPK) are disordered. [4Fe-4S] cluster contacts are provided by Cys-144, Cys-149, Cys-155, Cys-175, Cys-179, Cys-182, and Ser-390. The region spanning 158–379 (GSSKSAATAT…KERALEMGFL (222 aa)) is the Radical SAM core domain.

This sequence belongs to the radical SAM superfamily. Lipoyl synthase family. [4Fe-4S] cluster is required as a cofactor.

It is found in the mitochondrion. It catalyses the reaction [[Fe-S] cluster scaffold protein carrying a second [4Fe-4S](2+) cluster] + N(6)-octanoyl-L-lysyl-[protein] + 2 oxidized [2Fe-2S]-[ferredoxin] + 2 S-adenosyl-L-methionine + 4 H(+) = [[Fe-S] cluster scaffold protein] + N(6)-[(R)-dihydrolipoyl]-L-lysyl-[protein] + 4 Fe(3+) + 2 hydrogen sulfide + 2 5'-deoxyadenosine + 2 L-methionine + 2 reduced [2Fe-2S]-[ferredoxin]. The protein operates within protein modification; protein lipoylation via endogenous pathway; protein N(6)-(lipoyl)lysine from octanoyl-[acyl-carrier-protein]: step 2/2. Catalyzes the radical-mediated insertion of two sulfur atoms into the C-6 and C-8 positions of the octanoyl moiety bound to the lipoyl domains of lipoate-dependent enzymes, thereby converting the octanoylated domains into lipoylated derivatives. The protein is Lipoyl synthase, mitochondrial of Paracoccidioides brasiliensis (strain Pb03).